The chain runs to 58 residues: Ribulose bisphosphate carboxylase large chain (58 aa).

Positions 1 to 2 are excised as a propeptide; sequence MS. Proline 3 carries the N-acetylproline modification. Lysine 14 is modified (N6,N6,N6-trimethyllysine).

The protein belongs to the RuBisCO large chain family. Type I subfamily. As to quaternary structure, heterohexadecamer of 8 large chains and 8 small chains.

It is found in the plastid. It localises to the chloroplast. The catalysed reaction is 2 (2R)-3-phosphoglycerate + 2 H(+) = D-ribulose 1,5-bisphosphate + CO2 + H2O. It carries out the reaction D-ribulose 1,5-bisphosphate + O2 = 2-phosphoglycolate + (2R)-3-phosphoglycerate + 2 H(+). Functionally, ruBisCO catalyzes two reactions: the carboxylation of D-ribulose 1,5-bisphosphate, the primary event in carbon dioxide fixation, as well as the oxidative fragmentation of the pentose substrate in the photorespiration process. Both reactions occur simultaneously and in competition at the same active site. The sequence is that of Ribulose bisphosphate carboxylase large chain (rbcL) from Rosa damascena (Damask rose).